Reading from the N-terminus, the 177-residue chain is Large ribosomal subunit protein uL6 (177 aa).

Residues 152 to 171 (RPPEPYKGKGVRYDDEEVRR) are compositionally biased toward basic and acidic residues. The segment at 152-177 (RPPEPYKGKGVRYDDEEVRRKEAKKK) is disordered.

It belongs to the universal ribosomal protein uL6 family. As to quaternary structure, part of the 50S ribosomal subunit.

This protein binds to the 23S rRNA, and is important in its secondary structure. It is located near the subunit interface in the base of the L7/L12 stalk, and near the tRNA binding site of the peptidyltransferase center. This chain is Large ribosomal subunit protein uL6, found in Shewanella sp. (strain MR-4).